Reading from the N-terminus, the 921-residue chain is MAPLALVGVALLLGAPHCLGEATPTPSLPPPPANDSDASPGGCQGSYRCQPGVLLPVWEPDDPSLGDKAARAVVYFVAMVYMFLGLSIIADRFMASIEVITSKEKEITITKANGETSVGTVRIWNETVSNLTLMALGSSAPEILLSVIEVCGHNFQAGELGPGTIVGSAAFNMFVVIAVCVYVIPAGESRKIKHLRVFFVTASWSIFAYVWLYLILAVFSPGVVQVWEALLTLVFFPVCVVFAWMADKRLLFYKYVYKRYRTDPRSGIIIGAEGDPPKSIELDGTFVGTEVPGELGALGTGPAEARELDASRREVIQILKDLKQKHPDKDLEQLVGIAKYYALLHQQKSRAFYRIQATRLMTGAGNVLRRHAADAARRPGANDGAPDDEDDGASRIFFEPSLYHCLENCGSVLLSVACQGGEGNSTFYVDYRTEDGSAKAGSDYEYSEGTLVFKPGETQKELRIGIIDDDIFEEDEHFFVRLLNLRVGDAQGMFEPDGGGRPKGRLVAPLLATVTILDDDHAGIFSFQDRLLHVSECMGTVDVRVVRSSGARGTVRLPYRTVDGTARGGGVHYEDACGELEFGDDETMKTLQVKIVDDEEYEKKDNFFIELGQPQWLKRGISALLLNQGDGDRKLTAEEEEAQRIAEMGKPVLGENCRLEVIIEESYDFKNTVDKLIKKTNLALVIGTHSWREQFLEAVTVSAGDEEEDEDGSREERLPSCFDYVMHFLTVFWKVLFACLPPTEYCHGWACFGVCILVIGLLTALIGDLASHFGCTVGLKDSVNAVVFVALGTSIPDTFASKVAALQDQCADASIGNVTGSNAVNVFLGLGVAWSVAAVYWAVQGRPFEVRTGTLAFSVTLFTVFAFVGIAVLLYRRRPHIGGELGGPRGPKLATTALFLGLWFLYILFASLEAYCHIRGF.

The signal sequence occupies residues 1-20 (MAPLALVGVALLLGAPHCLG). At 21–68 (EATPTPSLPPPPANDSDASPGGCQGSYRCQPGVLLPVWEPDDPSLGDK) the chain is on the extracellular side. Residues 23–42 (TPTPSLPPPPANDSDASPGG) are disordered. N-linked (GlcNAc...) asparagine glycosylation occurs at Asn-34. Residues 69–90 (AARAVVYFVAMVYMFLGLSIIA) traverse the membrane as a helical segment. At 91–130 (DRFMASIEVITSKEKEITITKANGETSVGTVRIWNETVSN) the chain is on the cytoplasmic side. The helical transmembrane segment at 131–152 (LTLMALGSSAPEILLSVIEVCG) threads the bilayer. Residues 135 to 175 (ALGSSAPEILLSVIEVCGHNFQAGELGPGTIVGSAAFNMFV) form an Alpha-1 repeat. Residues 153–164 (HNFQAGELGPGT) lie on the Extracellular side of the membrane. Residues 165–185 (IVGSAAFNMFVVIAVCVYVIP) traverse the membrane as a helical segment. Residues 186 to 196 (AGESRKIKHLR) are Cytoplasmic-facing. Residues 197 to 219 (VFFVTASWSIFAYVWLYLILAVF) traverse the membrane as a helical segment. Over 220–222 (SPG) the chain is Extracellular. The helical transmembrane segment at 223-246 (VVQVWEALLTLVFFPVCVVFAWMA) threads the bilayer. The Cytoplasmic portion of the chain corresponds to 247-720 (DKRLLFYKYV…DGSREERLPS (474 aa)). Residues 248-267 (KRLLFYKYVYKRYRTDPRSG) are putative calmodulin-binding region. A disordered region spans residues 372–391 (AADAARRPGANDGAPDDEDD). Calx-beta domains are found at residues 384–483 (GAPD…VRLL) and 512–612 (ATVT…IELG). Residues Glu-407, Asp-443, Asp-468, Asp-469, Ile-471, Glu-473, Glu-476, Asp-518, Asp-519, Asp-520, Glu-536, Asp-598, Glu-599, and Glu-600 each contribute to the Ca(2+) site. Residue Ser-622 is modified to Phosphoserine. Glu-665 is a Ca(2+) binding site. The helical transmembrane segment at 721–740 (CFDYVMHFLTVFWKVLFACL) threads the bilayer. At 741-747 (PPTEYCH) the chain is on the extracellular side. The helical transmembrane segment at 748–770 (GWACFGVCILVIGLLTALIGDLA) threads the bilayer. The Cytoplasmic portion of the chain corresponds to 771-772 (SH). A helical transmembrane segment spans residues 773-791 (FGCTVGLKDSVNAVVFVAL). The Alpha-2 repeat unit spans residues 790–826 (ALGTSIPDTFASKVAALQDQCADASIGNVTGSNAVNV). Residues 792–822 (GTSIPDTFASKVAALQDQCADASIGNVTGSN) are Extracellular-facing. Residue Asn-817 is glycosylated (N-linked (GlcNAc...) asparagine). A helical transmembrane segment spans residues 823 to 843 (AVNVFLGLGVAWSVAAVYWAV). At 844–854 (QGRPFEVRTGT) the chain is on the cytoplasmic side. Residues 855–875 (LAFSVTLFTVFAFVGIAVLLY) form a helical membrane-spanning segment. Over 876–892 (RRRPHIGGELGGPRGPK) the chain is Extracellular. Residues 893 to 909 (LATTALFLGLWFLYILF) traverse the membrane as a helical segment. The Cytoplasmic segment spans residues 910 to 921 (ASLEAYCHIRGF).

This sequence belongs to the Ca(2+):cation antiporter (CaCA) (TC 2.A.19) family. SLC8 subfamily. Detected in neocortex and hippocampus on pyramidal cells, astrocyte processes and dendrites (at protein level). Brain and skeletal muscle.

It is found in the cell membrane. The protein resides in the basolateral cell membrane. Its subcellular location is the perikaryon. The protein localises to the cell projection. It localises to the dendrite. It is found in the dendritic spine. It carries out the reaction Ca(2+)(in) + 3 Na(+)(out) = Ca(2+)(out) + 3 Na(+)(in). Its activity is regulated as follows. Calcium transport is down-regulated by Na(+) and stimulated by Ca(2+). In terms of biological role, mediates the electrogenic exchange of Ca(2+) against Na(+) ions across the cell membrane, and thereby contributes to the regulation of cytoplasmic Ca(2+) levels and Ca(2+)-dependent cellular processes. Contributes to cellular Ca(2+) homeostasis in excitable cells. Contributes to the rapid decrease of cytoplasmic Ca(2+) levels back to baseline after neuronal activation, and thereby contributes to modulate synaptic plasticity, learning and memory. Plays a role in regulating urinary Ca(2+) and Na(+) excretion. This chain is Sodium/calcium exchanger 2 (Slc8a2), found in Rattus norvegicus (Rat).